The chain runs to 792 residues: MAKQSSRELALERRKALSNSGKKSTTLNGSSPNRIRTASDARLTRTDQSFVKAGKESVQLTAPKREQLDTSFVASRESSGASRRQVKTIRNSSRELVLARRDELSRRGQPAAKSKDRTRAEVEKISSKVSQQDAAKKQVNDLASDQKGVDESSSKSLKSLDTVSRLSSRNSTSRPSAKRRSIQNPSRALVLARREAQSKHGKTAANQPTSAASVARQGDPDLSSREISQRVRELRSKSGATGKKRSGACRPCGPNRNGSKQAVAADAHWKVGLSETSTGQVVTGTQANRSSKTTGNEASTCRSITGTQYLGSEVFDTFCQSAPQPGQPLKVAVTNTSHGNRVTGNEVGRSEKVTGDEPGTCKTLTGTEYISANQANQYCGVSQPSPRKVGQSVTEDGRKVSGVMVGRSEKVTGDEAGSNRQLTGDQYLGVDPLPEGRSAEKVGSFNTLRGAGVTGTNVARSEYVTGNEPGSCKRVTGDEYVGPQQYNTFCGGKPNPEAAKVGLSLTNKSQTVSGTLTGRSELVTGDEPGTCKAVTGTPYSGVEQASGWCDTNSVREIQDRTPKLLGTPGAVMTGLQPGVGGVMTGAEKGACEPLTGTPYVGGDQLVQACGSDAPAGSNDHQGSSESSPWTHFSVQSPARAMQLQRDPRSGVTGTSYEQGSQITGPFNMAVDKITGTEQFRFDRKQRHFKSVPVEATPNDVSQTRPESRVTGEGQSAGLNITGDDWDRSERVTGTEGASARRRNPTRPGPMSAMPAADLKRNEEVSQPMSRVTGSSGNTDQGSLITVSGGARG.

Residues 1–15 are compositionally biased toward basic and acidic residues; that stretch reads MAKQSSRELALERRK. The segment at 1–235 is N-terminal domain; the sequence is MAKQSSRELA…EISQRVRELR (235 aa). 3 disordered regions span residues 1–259, 280–299, and 338–359; these read MAKQ…RNGS, QVVT…NEAS, and HGNR…DEPG. The stretch at 7–22 is one N-repeat 1 repeat; the sequence is RELALERRKALSNSGK. Composition is skewed to polar residues over residues 17–36 and 69–82; these read LSNS…NRIR and DTSF…SGAS. Residues 94 to 109 form an N-repeat 2 repeat; it reads RELVLARRDELSRRGQ. 2 stretches are compositionally biased toward basic and acidic residues: residues 97–106 and 113–126; these read VLARRDELSR and KSKD…EKIS. Residues 161-175 are compositionally biased toward polar residues; the sequence is DTVSRLSSRNSTSRP. 2 N-repeat repeats span residues 187–202 and 225–240; these read RALV…KHGK and REIS…KSGA. Basic and acidic residues predominate over residues 218–236; sequence GDPDLSSREISQRVRELRS. A middle region region spans residues 240 to 615; the sequence is ATGKKRSGAC…VQACGSDAPA (376 aa). M-repeat repeat units lie at residues 270–319, 330–379, 388–427, 441–490, 500–549, and 560–609; these read KVGL…DTFC, KVAV…NQYC, KVGQ…GDQY, KVGS…NTFC, KVGL…SGWC, and RTPK…VQAC. 2 disordered regions span residues 608-662 and 687-792; these read ACGS…GSQI and HFKS…GARG. Positions 616 to 792 are C-terminal domain; that stretch reads GSNDHQGSSE…LITVSGGARG (177 aa). 2 stretches are compositionally biased toward polar residues: residues 618-636 and 651-662; these read NDHQ…SVQS and VTGTSYEQGSQI. 2 C-repeat repeats span residues 633–678 and 703–738; these read SVQS…GTEQ and TRPE…EGAS. Residues 763–792 are C-terminal peptide (CTP); sequence EVSQPMSRVTGSSGNTDQGSLITVSGGARG. Over residues 764 to 785 the composition is skewed to polar residues; sequence VSQPMSRVTGSSGNTDQGSLIT.

The protein belongs to the CsoS2 family. As to quaternary structure, probably interacts with the carboxysome major shell protein CsoS1 via the N-terminal domain; this complex probably also interacts with RuBisCO. Has been suggested to undergo ribosomal frameshifting, as does its ortholog in H.neapolitanus. The exact position of the putative frameshift is not given, but it would probably occur in the sixth M-repeat and remove the C-terminus.

The protein localises to the carboxysome. Its function is as follows. Required for alpha-carboxysome (Cb) assembly, mediates interaction between RuBisCO and the Cb shell. The protein is probably intrinsically disordered. The C-terminal repeats act as the encapsulation signal to target proteins to the Cb; they are necessary and sufficient to target both CsoS2 and foreign proteins to the Cb. The N-terminal repeats of this protein bind simultaneously to both subunits of RuBisCO. Probably also interacts with the major shell proteins (CsoS1); that interaction would increase the local concentration of CsoS2 so that it can condense RuBisCO and full carboxysomes can be formed. The protein is Carboxysome assembly protein CsoS2 of Prochlorococcus marinus (strain MIT 9313).